Reading from the N-terminus, the 345-residue chain is Protein RecA (345 aa).

66-73 contacts ATP; it reads GPESSGKT.

It belongs to the RecA family.

It localises to the cytoplasm. In terms of biological role, can catalyze the hydrolysis of ATP in the presence of single-stranded DNA, the ATP-dependent uptake of single-stranded DNA by duplex DNA, and the ATP-dependent hybridization of homologous single-stranded DNAs. It interacts with LexA causing its activation and leading to its autocatalytic cleavage. The polypeptide is Protein RecA (Frankia casuarinae (strain DSM 45818 / CECT 9043 / HFP020203 / CcI3)).